The chain runs to 112 residues: Nucleoid-associated protein CPR_0056 (112 aa).

Positions 91 to 100 are enriched in basic and acidic residues; the sequence is ASEETSEKMG. Residues 91–112 are disordered; that stretch reads ASEETSEKMGKLTGGMGMPGLF. Positions 102 to 112 are enriched in gly residues; sequence LTGGMGMPGLF.

This sequence belongs to the YbaB/EbfC family. In terms of assembly, homodimer.

It localises to the cytoplasm. The protein resides in the nucleoid. Binds to DNA and alters its conformation. May be involved in regulation of gene expression, nucleoid organization and DNA protection. This chain is Nucleoid-associated protein CPR_0056, found in Clostridium perfringens (strain SM101 / Type A).